A 239-amino-acid chain; its full sequence is Ribosomal RNA small subunit methyltransferase G (239 aa).

Residues glycine 78, phenylalanine 83, 129 to 130 (AE), and arginine 148 each bind S-adenosyl-L-methionine.

The protein belongs to the methyltransferase superfamily. RNA methyltransferase RsmG family.

It is found in the cytoplasm. Its function is as follows. Specifically methylates the N7 position of a guanine in 16S rRNA. This Clostridium tetani (strain Massachusetts / E88) protein is Ribosomal RNA small subunit methyltransferase G.